Consider the following 576-residue polypeptide: MSYKGFPSHSKVSKEDQEFYDLKNKAAEYYRSNGVPQKIESVLNEMFWQKPDDIYGYLANYFSGLSYTPVISKITGKEVFDGRGLTAVQAEVHCIIRNEEKMVCGAVMDGSFDGLPDGVESGEMLSNGDLQHLSITMALKWIRENFSPVLRGFNPTDQTNVDKILSDFAMARYLEHKDSLIREKEEELRNEAMSEAPPQATPTSAPAKDKKGNDKGKKGNITENPLPPAEPPVPRLPGATAVGAVSLAVAKTAAELLGTPLYRHITAVRDPQAQKEMQLPVPIITIMSCGKNSAGKLNLLEEIILMPSSSLRVREVIGMGLDLQCEMRRILNGSTYKALPVGVSDEGALQVGFDRPEQALDLLAEACANLALPLGSDLHLAVNCAAHSLMDYSRGKYEVMSGCHKSPDELVDIYEGLINKYPAIRSLIDPFRKEDVGQWERLASVIGQSCCLLADAASNLCPRWREAKPLPPGATKAIIRHHSDMTISDLIQSIAEHKETILAAGSGDASMVDLAVGSGVSFLKLGGLRGAKRMDKYNRLMAIEEEQEGIAGAGEINQPVSFESESGWNSLTVSAK.

The segment at 187 to 232 (ELRNEAMSEAPPQATPTSAPAKDKKGNDKGKKGNITENPLPPAEPP) is disordered. The segment covering 196–206 (APPQATPTSAP) has biased composition (low complexity). The segment covering 207-217 (AKDKKGNDKGK) has biased composition (basic and acidic residues). Residues Glu-302 and Lys-524 each coordinate substrate.

It belongs to the enolase family.

It catalyses the reaction (2R)-2-phosphoglycerate = phosphoenolpyruvate + H2O. Its pathway is carbohydrate degradation; glycolysis; pyruvate from D-glyceraldehyde 3-phosphate: step 4/5. This is Enolase 4 (eno4) from Danio rerio (Zebrafish).